Here is a 75-residue protein sequence, read N- to C-terminus: MSKLGVLLTICLLLFPLTALPMDGDQPVDRLAERMQDNISSEQHTFFEKRLPSCCSLNLRLCPVPACKRNPCCTG.

The N-terminal stretch at 1 to 19 (MSKLGVLLTICLLLFPLTA) is a signal peptide. Positions 20–50 (LPMDGDQPVDRLAERMQDNISSEQHTFFEKR) are excised as a propeptide. 4-hydroxyproline occurs at positions 52, 63, 65, and 71. 3 disulfides stabilise this stretch: C54–C67, C55–C72, and C62–C73. Position 74 is a threonine amide (T74).

It belongs to the conotoxin M superfamily. Expressed by the venom duct.

It localises to the secreted. In terms of biological role, kappa-conotoxins inhibits voltage-gated potassium channels (Kv). This synthetic toxin reversibly inhibits the insect potassium channel Shaker K+, the teleost homolog TSha1 and the mammalian Kv1.2/KCNA2 channel. Interacts with the pore region of the insect channel, in a state-dependent manner. Causes seizure when intracerebrovascularly injected into mice. Is also toxic when intrathecally injected into mice, but shows no visible effects by intraperitoneal injection. Shows protective effects on cardiac tissue when administered after an ischemic event. This chain is Kappa-conotoxin RIIIK, found in Conus radiatus (Rayed cone).